Consider the following 129-residue polypeptide: Translation initiation factor 5A (129 aa).

Lys-36 bears the Hypusine mark.

It belongs to the eIF-5A family.

Its subcellular location is the cytoplasm. Its function is as follows. Functions by promoting the formation of the first peptide bond. This chain is Translation initiation factor 5A (eIF5A), found in Methanobrevibacter smithii (strain ATCC 35061 / DSM 861 / OCM 144 / PS).